Reading from the N-terminus, the 252-residue chain is D-aminoacyl-tRNA deacylase (252 aa).

The protein belongs to the DtdA deacylase family. As to quaternary structure, monomer. Zn(2+) is required as a cofactor.

It catalyses the reaction a D-aminoacyl-tRNA + H2O = a tRNA + a D-alpha-amino acid + H(+). The catalysed reaction is glycyl-tRNA(Ala) + H2O = tRNA(Ala) + glycine + H(+). Its function is as follows. D-aminoacyl-tRNA deacylase with broad substrate specificity. By recycling D-aminoacyl-tRNA to D-amino acids and free tRNA molecules, this enzyme counteracts the toxicity associated with the formation of D-aminoacyl-tRNA entities in vivo. The protein is D-aminoacyl-tRNA deacylase of Pyrobaculum arsenaticum (strain DSM 13514 / JCM 11321 / PZ6).